We begin with the raw amino-acid sequence, 22 residues long: Protein YncP (22 aa).

The chain is Protein YncP from Escherichia coli (strain K12).